Here is a 279-residue protein sequence, read N- to C-terminus: Thioredoxin-like 1-2, chloroplastic (279 aa).

Residues 1–34 (MAATAAQAVAVKGSVAVPPCGSRGRRRGAVASVR) constitute a chloroplast transit peptide. The region spanning 61–203 (PRRSRPVPRN…FRDALAKHKP (143 aa)) is the Thioredoxin domain. Residues C126 and C129 each act as nucleophile in the active site. C126 and C129 are oxidised to a cystine. Positions 242–279 (GDAAAAQELDRGSTKLSPPAKPLVKQGSEERSLVSSGR) are disordered.

The protein belongs to the thioredoxin family.

It localises to the plastid. It is found in the chloroplast. Its function is as follows. Probable thiol-disulfide oxidoreductase that may participate in various redox reactions. This chain is Thioredoxin-like 1-2, chloroplastic, found in Oryza sativa subsp. japonica (Rice).